The primary structure comprises 129 residues: Snaclec rhodocetin subunit beta (129 aa).

A C-type lectin domain is found at 3–125; that stretch reads RCPTTWSASK…EEKNAFLCKF (123 aa). 3 disulfide bridges follow: Cys4-Cys15, Cys32-Cys123, and Cys98-Cys115.

Heterotetramer of subunit alpha, beta, gamma and delta; only the gamma and the delta subunits are disulfide-linked. Alpha-beta heterodimer and gamma-delta heterodimer associate orthogonally, giving a cruciform conformation. This heterotetramer may covalently dimerizes thanks to the gamma subunit. As to expression, expressed by the venom gland.

It localises to the secreted. Functionally, potent inhibitor of collagen-induced platelet aggregation. It acts by binding to the integrin alpha2A domain and blocks collagen binding to integrin alpha-2/beta-1 (ITGA2/ITGB1). The gamma/delta subunits mainly contribute to this activity. The polypeptide is Snaclec rhodocetin subunit beta (Calloselasma rhodostoma (Malayan pit viper)).